The primary structure comprises 807 residues: Carbamoyltransferase HypF2 (807 aa).

Residues 14–101 form the Acylphosphatase-like domain; the sequence is RIRIRVRGVV…VDADGFAILE (88 aa). C4-type zinc fingers lie at residues 120–145 and 170–195; these read CPDC…CTQC and CRPC…CPDC. One can recognise a YrdC-like domain in the interval 212–415; that stretch reads VDPIAETVAR…HVQFIRRARG (204 aa). A disordered region spans residues 663–682; sequence WGEQPSPGRPKTVAHSLGGV.

The protein belongs to the carbamoyltransferase HypF family.

It carries out the reaction C-terminal L-cysteinyl-[HypE protein] + carbamoyl phosphate + ATP + H2O = C-terminal S-carboxamide-L-cysteinyl-[HypE protein] + AMP + phosphate + diphosphate + H(+). Its pathway is protein modification; [NiFe] hydrogenase maturation. Its function is as follows. Involved in the maturation of [NiFe] hydrogenases. Along with HypE, it catalyzes the synthesis of the CN ligands of the active site iron of [NiFe]-hydrogenases. HypF functions as a carbamoyl transferase using carbamoylphosphate as a substrate and transferring the carboxamido moiety in an ATP-dependent reaction to the thiolate of the C-terminal cysteine of HypE yielding a protein-S-carboxamide. The polypeptide is Carbamoyltransferase HypF2 (hypF2) (Cupriavidus necator (strain ATCC 17699 / DSM 428 / KCTC 22496 / NCIMB 10442 / H16 / Stanier 337) (Ralstonia eutropha)).